Here is a 394-residue protein sequence, read N- to C-terminus: Serine palmitoyltransferase (394 aa).

Pyridoxal 5'-phosphate-binding positions include 111-112, Ser183, His211, and Thr239; that span reads GF. Position 242 is an N6-(pyridoxal phosphate)lysine (Lys242).

The protein belongs to the class-II pyridoxal-phosphate-dependent aminotransferase family. Requires pyridoxal 5'-phosphate as cofactor.

It catalyses the reaction L-serine + hexadecanoyl-CoA + H(+) = 3-oxosphinganine + CO2 + CoA. The protein operates within lipid metabolism; sphingolipid metabolism. Functionally, involved in de novo bacterial ceramide synthesis. Catalyzes the condensation of L-serine with palmitoyl-CoA (hexadecanoyl-CoA) to produce 3-oxosphinganine. Also capable of using alanine as substrate leading to the formation of 1-deoxysphinganine (1-deoxySa). Contributes to the levels of endogenous sphingolipids in its host. The polypeptide is Serine palmitoyltransferase (Bacteroides ovatus (strain ATCC 8483 / DSM 1896 / JCM 5824 / BCRC 10623 / CCUG 4943 / NCTC 11153)).